The following is a 1254-amino-acid chain: DNA-directed RNA polymerase subunit beta (1254 aa).

This sequence belongs to the RNA polymerase beta chain family. In terms of assembly, the RNAP catalytic core consists of 2 alpha, 1 beta, 1 beta' and 1 omega subunit. When a sigma factor is associated with the core the holoenzyme is formed, which can initiate transcription.

It catalyses the reaction RNA(n) + a ribonucleoside 5'-triphosphate = RNA(n+1) + diphosphate. Its function is as follows. DNA-dependent RNA polymerase catalyzes the transcription of DNA into RNA using the four ribonucleoside triphosphates as substrates. This is DNA-directed RNA polymerase subunit beta from Protochlamydia amoebophila (strain UWE25).